Here is a 776-residue protein sequence, read N- to C-terminus: MATEYGDDDGGLYFHSTQMQSIHESLQQEENQRLYLQTSIKKLESFKHVNNDSSNNSNSGAVSVVQIKKKAATKKRKLMARKPNVKKPKSSSEAVRQAFEKDKFAYFTNNQAKIDDFLPGKSTSTEPSTSNQGSLISSDEWNYIKQIYLQKPTKNKTTLKSIRKRIKQYENSGTGMWEIAALNVDVSLNDEDIQHLYALDEEQMVSDDNSSTEDDTDPTQNDGLILTLSQNCSTQRDICHHEKDDQKYILIDSSICETYQQDKSLQRHSQKDSDNGNTIPDQNSAITIGEMESTAAHEVEEIFSTPSYVPSNKLNADQDRSDESESSIIMLADNIVSTQPDIVESISDSESEIEIIERPRLQVLRSVYENGTSTNQTRQELTMPKCLENNKISENEEYESEVVESDSTPIITPVVTPTKKPHIFPTNEPAIPIALRSTPNKIKNNVDRIFGSPSPIKLVLESPLKKHINIEFSDSESIYSTAVSQFGTPKQTTSFSPEVLTQKVGSPPLDACSDSGPTGVVSSMPYKKPHSTKRLRTTTLEISAALRVKNYTDPKNNITVKKFGEEIKREFIDLDNEIPDSESSDDDTGFSIIEITRQVEECKEPANDDYSEEQSTDLFQIGLKNKQETGNTSHMQVPSSPELQFENAGNTFLNSSLVEEDEFTKLKATELRERFKDWGLKPVQRKDKMLEILQGISDFISPESLLALKGFDLQQCVFDKLELLIKQDQFWYDRILTFEPIRLEELKQWLNSHNHHLELDILRLYCDRNCITTTNT.

Positions 201–217 (EEQMVSDDNSSTEDDTD) are enriched in acidic residues. 3 disordered regions span residues 201-223 (EEQMVSDDNSSTEDDTDPTQNDG), 263-283 (KSLQRHSQKDSDNGNTIPDQN), and 507-531 (PPLDACSDSGPTGVVSSMPYKKPHS).

The protein belongs to the SLX4 family. Forms a heterodimer with SLX1. Post-translationally, phosphorylated in response to DNA damage.

Its subcellular location is the nucleus. Its function is as follows. Regulatory subunit of the SLX1-SLX4 structure-specific endonuclease that resolves DNA secondary structures generated during DNA repair and recombination. Has endonuclease activity towards branched DNA substrates, introducing single-strand cuts in duplex DNA close to junctions with ss-DNA. The protein is Structure-specific endonuclease subunit SLX4 of Candida albicans (strain SC5314 / ATCC MYA-2876) (Yeast).